The sequence spans 318 residues: Trans-prenyltransferase (318 aa).

The helical transmembrane segment at 1–21 (MLHLIYISIIVVLIIILISYT) threads the bilayer. The isopentenyl diphosphate site is built by Lys85, Arg88, and His122. Asp129 and Asp135 together coordinate Mg(2+). Arg140 contacts dimethylallyl diphosphate. Arg141 provides a ligand contact to isopentenyl diphosphate. Residues Lys216, Thr217, and Gln254 each contribute to the dimethylallyl diphosphate site.

The protein belongs to the FPP/GGPP synthase family. Asfivirus trans-prenyltransferase subfamily. Mg(2+) serves as cofactor.

The protein localises to the host endoplasmic reticulum. It is found in the host membrane. The catalysed reaction is isopentenyl diphosphate + dimethylallyl diphosphate = (2E)-geranyl diphosphate + diphosphate. The enzyme catalyses isopentenyl diphosphate + (2E)-geranyl diphosphate = (2E,6E)-farnesyl diphosphate + diphosphate. It catalyses the reaction isopentenyl diphosphate + (2E,6E)-farnesyl diphosphate = (2E,6E,10E)-geranylgeranyl diphosphate + diphosphate. It carries out the reaction isopentenyl diphosphate + (2E,6E,10E)-geranylgeranyl diphosphate = (2E,6E,10E,14E)-geranylfarnesyl diphosphate + diphosphate. Its pathway is isoprenoid biosynthesis; farnesyl diphosphate biosynthesis; farnesyl diphosphate from geranyl diphosphate and isopentenyl diphosphate: step 1/1. The protein operates within isoprenoid biosynthesis; geranyl diphosphate biosynthesis; geranyl diphosphate from dimethylallyl diphosphate and isopentenyl diphosphate: step 1/1. It functions in the pathway isoprenoid biosynthesis; geranylgeranyl diphosphate biosynthesis; geranylgeranyl diphosphate from farnesyl diphosphate and isopentenyl diphosphate: step 1/1. Trans-prenyltransferase that catalyzes the sequential condensation of isopentenyl diphosphate (IPP) with different allylic diphosphates, such as dimethylallyl diphosphate (DMAPP), geranyl diphosphate (GPP), farnesyl diphosphate (FPP) and geranylgeranyl diphosphate (GGPP), farnesyl diphosphate being the best allylic substrate. This is Trans-prenyltransferase from African swine fever virus (isolate Tick/South Africa/Pretoriuskop Pr4/1996) (ASFV).